A 2215-amino-acid chain; its full sequence is Unconventional myosin-VIIa (2215 aa).

In terms of domain architecture, Myosin motor spans 65–741 (HGVEDMIRLG…HDMLLEVERD (677 aa)). An ATP-binding site is contributed by 158-165 (GESGAGKT). Residues 632-639 (FVRCIKPN) form an actin-binding region. IQ domains follow at residues 745 to 765 (TDRV…SNFL), 768 to 788 (KNAA…KNYG), 791 to 811 (RLGF…QQYR), 814 to 834 (RQRI…KAFR), and 837 to 857 (LWAV…RLHQ). Positions 858-935 (RLRAEYLWRL…LEQMERARHE (78 aa)) are SAH. Positions 1017–1253 (YTRRPLKQPL…PSWLELQATK (237 aa)) constitute a MyTH4 1 domain. In terms of domain architecture, FERM 1 spans 1258 to 1602 (IMLPVTFMDG…LVVTFLEGLR (345 aa)). Serine 1569 is subject to Phosphoserine. Position 1571 is a phosphothreonine (threonine 1571). Residues 1603-1672 (KRSKYVVALQ…PTDSVYVMPT (70 aa)) form the SH3 domain. Residues 1747–1896 (HTREPLKQAL…PHLVEVEAIQ (150 aa)) enclose the MyTH4 2 domain. The FERM 2 domain occupies 1902–2205 (IFHKVYFPDD…SYISQMLTAM (304 aa)).

This sequence belongs to the TRAFAC class myosin-kinesin ATPase superfamily. Myosin family. As to quaternary structure, might homodimerize in a two headed molecule through the formation of a coiled-coil rod. Identified in a complex with USH1C and USH1G. Interacts with MYRIP. Interacts with RPE65. Interacts with CIB2. May interact with CALM. Interacts with WHRN. Interacts with PLEKHB1 (via PH domain). Interacts with PCDH15. Interacts with TWF2. Interacts with USH1G. Interacts with MYH9. Interacts (via MyTH4-FERM domains) with cytoplasmic regions of ADGRV1 and USH2A. Interacts with PDZD7 (via MyTH4-FERM domains). Interacts with CALML4. Expressed in the pigment epithelium and the photoreceptor cells of the retina. Also found in kidney, liver, testis, cochlea, lymphocytes. Not expressed in brain.

It localises to the cytoplasm. The protein resides in the cell cortex. Its subcellular location is the cytoskeleton. The protein localises to the synapse. ATP hydrolysis is inhibited by Mg(2+), already at a concentration of 0.4 mM. In terms of biological role, myosins are actin-based motor molecules with ATPase activity. Unconventional myosins serve in intracellular movements. Their highly divergent tails bind to membranous compartments, which are then moved relative to actin filaments. In the retina, plays an important role in the renewal of the outer photoreceptor disks. Plays an important role in the distribution and migration of retinal pigment epithelial (RPE) melanosomes and phagosomes, and in the regulation of opsin transport in retinal photoreceptors. In the inner ear, plays an important role in differentiation, morphogenesis and organization of cochlear hair cell bundles. Involved in hair-cell vesicle trafficking of aminoglycosides, which are known to induce ototoxicity. Motor protein that is a part of the functional network formed by USH1C, USH1G, CDH23 and MYO7A that mediates mechanotransduction in cochlear hair cells. Required for normal hearing. This chain is Unconventional myosin-VIIa, found in Homo sapiens (Human).